A 194-amino-acid chain; its full sequence is Dihydrofolate reductase HdrB (194 aa).

In terms of domain architecture, DHFR spans 18–194 (RFVLVAAVAD…ADRGAEESDE (177 aa)). Residues Ala24 and 30–36 (VIGRDGT) each bind NADP(+). Asp44 contributes to the substrate binding site. 62-63 (KT) is a binding site for NADP(+). 2 residues coordinate substrate: Arg69 and Arg78. Residues 84–85 (TT) and 123–130 (GGATVYEQ) each bind NADP(+). Substrate is bound at residue Thr141. The tract at residues 173 to 194 (SFVTYERKQPAAADRGAEESDE) is disordered.

The protein belongs to the dihydrofolate reductase family.

It carries out the reaction (6S)-5,6,7,8-tetrahydrofolate + NADP(+) = 7,8-dihydrofolate + NADPH + H(+). It functions in the pathway cofactor biosynthesis; tetrahydrofolate biosynthesis; 5,6,7,8-tetrahydrofolate from 7,8-dihydrofolate: step 1/1. With respect to regulation, maximum activity at KCl concentration of 0.5 M and activity decreases with increasing concentration of KCl. Key enzyme in folate metabolism. Catalyzes an essential reaction for de novo glycine and purine synthesis, and for DNA precursor synthesis. The protein is Dihydrofolate reductase HdrB (hdrB) of Haloferax volcanii (Halobacterium volcanii).